The following is a 194-amino-acid chain: Peptidyl-tRNA hydrolase (194 aa).

A tRNA-binding site is contributed by tyrosine 17. The active-site Proton acceptor is histidine 22. Positions 68, 70, and 116 each coordinate tRNA.

This sequence belongs to the PTH family. Monomer.

It localises to the cytoplasm. It carries out the reaction an N-acyl-L-alpha-aminoacyl-tRNA + H2O = an N-acyl-L-amino acid + a tRNA + H(+). In terms of biological role, hydrolyzes ribosome-free peptidyl-tRNAs (with 1 or more amino acids incorporated), which drop off the ribosome during protein synthesis, or as a result of ribosome stalling. Functionally, catalyzes the release of premature peptidyl moieties from peptidyl-tRNA molecules trapped in stalled 50S ribosomal subunits, and thus maintains levels of free tRNAs and 50S ribosomes. The chain is Peptidyl-tRNA hydrolase from Pseudomonas fluorescens (strain ATCC BAA-477 / NRRL B-23932 / Pf-5).